Here is a 173-residue protein sequence, read N- to C-terminus: Probable xanthine dehydrogenase subunit E (173 aa).

The 2Fe-2S ferredoxin-type domain maps to 14 to 90; that stretch reads EQFRMTVNGQ…GHSITTIEGL (77 aa). [2Fe-2S] cluster is bound by residues Cys52, Cys57, Cys60, Cys72, Cys110, Cys113, Cys145, and Cys147.

As to quaternary structure, could be composed of four subunits: PucA, PucC, PucD and PucE. The cofactor is [2Fe-2S] cluster.

The enzyme catalyses xanthine + NAD(+) + H2O = urate + NADH + H(+). The catalysed reaction is hypoxanthine + NAD(+) + H2O = xanthine + NADH + H(+). Its pathway is purine metabolism; hypoxanthine degradation; urate from hypoxanthine: step 1/2. The protein operates within purine metabolism; hypoxanthine degradation; urate from hypoxanthine: step 2/2. In terms of biological role, oxidizes hypoxanthine and xanthine to uric acid. This is Probable xanthine dehydrogenase subunit E (pucE) from Bacillus subtilis (strain 168).